A 275-amino-acid polypeptide reads, in one-letter code: MGIRKVKPTSPGRRFQEYSTFEEITADRPSEKGLIEPLRKTGGRNVNGRITCRHRGGGHKRHYRVIDFKRNKDDIPAKVAAIEYDPNRSARIALLFYADGEKRYILAPVNLKVGDTVMSGQASEIKPGNAMPLASIPLGTEVHNIELRLGKGGQIVRSAGGYAKVMAKEARYVLLRLPSSEMRKVLATCKATIGRVGNVEHDDVSIGKAGRNRWLGKRPRVRGVAMNPVDHPMGGGEGKSSGGRHPCSPWGQQSKGVRTRNNKRTDQFIVKRRSK.

A disordered region spans residues 221-275 (VRGVAMNPVDHPMGGGEGKSSGGRHPCSPWGQQSKGVRTRNNKRTDQFIVKRRSK).

Belongs to the universal ribosomal protein uL2 family. In terms of assembly, part of the 50S ribosomal subunit. Forms a bridge to the 30S subunit in the 70S ribosome.

Its function is as follows. One of the primary rRNA binding proteins. Required for association of the 30S and 50S subunits to form the 70S ribosome, for tRNA binding and peptide bond formation. It has been suggested to have peptidyltransferase activity; this is somewhat controversial. Makes several contacts with the 16S rRNA in the 70S ribosome. The sequence is that of Large ribosomal subunit protein uL2 from Desulfosudis oleivorans (strain DSM 6200 / JCM 39069 / Hxd3) (Desulfococcus oleovorans).